A 311-amino-acid polypeptide reads, in one-letter code: MQENQQITKKEQYSLNKLQKRLRRNVGEAIADFNMIEEGDRIMVCLSGGKDSYTMLEILRNLQQSAPINFSLVAVNLDQKQPGFPEHVLPEYLEKLGVEYKIVEENTYGIVKEKIPEGKTTCSLCSRLRRGILYRTATELGTTKIALGHHRDDILQTLFLNMFYGGKMKGMPPKLMSDDGKHIVIRPLAYCREKDIQRFADAKAFPIIPCNLCGSQPNLQRQVIADMLRDWDKRYPGRIETMFSAMQNVVPSHLCDTNLFDFKGITHGSEVVNGGDLAFDREEIPLQPAGWQPEEDENQLDELRLNVVEVK.

The short motif at 47–52 (SGGKDS) is the PP-loop motif element. Positions 122, 125, and 213 each coordinate [4Fe-4S] cluster.

Belongs to the TtcA family. Homodimer. It depends on Mg(2+) as a cofactor. [4Fe-4S] cluster serves as cofactor.

The protein localises to the cytoplasm. It carries out the reaction cytidine(32) in tRNA + S-sulfanyl-L-cysteinyl-[cysteine desulfurase] + AH2 + ATP = 2-thiocytidine(32) in tRNA + L-cysteinyl-[cysteine desulfurase] + A + AMP + diphosphate + H(+). It participates in tRNA modification. Its function is as follows. Catalyzes the ATP-dependent 2-thiolation of cytidine in position 32 of tRNA, to form 2-thiocytidine (s(2)C32). The sulfur atoms are provided by the cysteine/cysteine desulfurase (IscS) system. This chain is tRNA-cytidine(32) 2-sulfurtransferase, found in Shigella boydii serotype 4 (strain Sb227).